Consider the following 89-residue polypeptide: Small ribosomal subunit protein uS15 (89 aa).

It belongs to the universal ribosomal protein uS15 family. As to quaternary structure, part of the 30S ribosomal subunit. Forms a bridge to the 50S subunit in the 70S ribosome, contacting the 23S rRNA.

Its function is as follows. One of the primary rRNA binding proteins, it binds directly to 16S rRNA where it helps nucleate assembly of the platform of the 30S subunit by binding and bridging several RNA helices of the 16S rRNA. In terms of biological role, forms an intersubunit bridge (bridge B4) with the 23S rRNA of the 50S subunit in the ribosome. The polypeptide is Small ribosomal subunit protein uS15 (Acidithiobacillus ferrooxidans (strain ATCC 23270 / DSM 14882 / CIP 104768 / NCIMB 8455) (Ferrobacillus ferrooxidans (strain ATCC 23270))).